The following is a 271-amino-acid chain: Signal recognition particle receptor subunit beta (271 aa).

Residues 37 to 57 form a helical membrane-spanning segment; that stretch reads LLSVVVAVLAVLLTLVFWKLI. Residues 71–79 and 92–95 contribute to the GTP site; these read GLCDSGKTL and TQTS. Position 112 is a phosphoserine (Ser112). Residue Gly120 coordinates GTP. Thr214 is subject to Phosphothreonine. GTP is bound at residue Ala248.

It belongs to the SRP receptor beta subunit family. In terms of assembly, heterodimer with SRPRA.

It is found in the endoplasmic reticulum membrane. Functionally, component of the signal recognition particle (SRP) complex receptor (SR). Ensures, in conjunction with the SRP complex, the correct targeting of the nascent secretory proteins to the endoplasmic reticulum membrane system. May mediate the membrane association of SR. The chain is Signal recognition particle receptor subunit beta (SRPRB) from Homo sapiens (Human).